A 390-amino-acid polypeptide reads, in one-letter code: Elongation factor Tu 2 (390 aa).

Positions K10–R201 constitute a tr-type G domain. Residues G19–T26 are G1. G19 to T26 serves as a coordination point for GTP. T26 contributes to the Mg(2+) binding site. Positions G55 to A59 are G2. Positions D76–G79 are G3. Residues D76–H80 and N131–D134 each bind GTP. A G4 region spans residues N131–D134. A G5 region spans residues S168–L170.

It belongs to the TRAFAC class translation factor GTPase superfamily. Classic translation factor GTPase family. EF-Tu/EF-1A subfamily. As to quaternary structure, monomer.

The protein localises to the cytoplasm. It catalyses the reaction GTP + H2O = GDP + phosphate + H(+). GTP hydrolase that promotes the GTP-dependent binding of aminoacyl-tRNA to the A-site of ribosomes during protein biosynthesis. The sequence is that of Elongation factor Tu 2 from Wolbachia sp. subsp. Brugia malayi (strain TRS).